Here is a 572-residue protein sequence, read N- to C-terminus: Formate--tetrahydrofolate ligase (572 aa).

An ATP-binding site is contributed by 65-72; sequence TPLGEGKT.

It belongs to the formate--tetrahydrofolate ligase family.

The enzyme catalyses (6S)-5,6,7,8-tetrahydrofolate + formate + ATP = (6R)-10-formyltetrahydrofolate + ADP + phosphate. The protein operates within one-carbon metabolism; tetrahydrofolate interconversion. This chain is Formate--tetrahydrofolate ligase, found in Chloroflexus aggregans (strain MD-66 / DSM 9485).